Here is a 117-residue protein sequence, read N- to C-terminus: 3',5'-cyclic-AMP phosphodiesterase 4A (117 aa).

Residues K42–P79 are disordered. The segment covering M53 to R63 has biased composition (basic and acidic residues). Positions Q78–L117 are catalytic.

It belongs to the cyclic nucleotide phosphodiesterase family. PDE4 subfamily. Interacts with LYN (via SH3 domain). Interacts with ARRB2. It depends on Zn(2+) as a cofactor. Mg(2+) serves as cofactor. Requires Mn(2+) as cofactor. Proteolytically cleaved by CASP3.

The protein resides in the cytoplasm. It localises to the cytosol. The protein localises to the membrane. The catalysed reaction is 3',5'-cyclic AMP + H2O = AMP + H(+). The protein operates within purine metabolism; 3',5'-cyclic AMP degradation; AMP from 3',5'-cyclic AMP: step 1/1. In terms of biological role, hydrolyzes the second messenger 3',5'-cyclic AMP (cAMP), which is a key regulator of many important physiological processes. This is 3',5'-cyclic-AMP phosphodiesterase 4A (PDE4A) from Cavia porcellus (Guinea pig).